We begin with the raw amino-acid sequence, 655 residues long: Probable potassium transport system protein Kup (655 aa).

Transmembrane regions (helical) follow at residues 19–39, 42–62, 102–122, 132–152, 161–181, 214–234, 246–266, 282–302, 338–358, 370–390, 395–415, and 420–440; these read GLLI…LYVM, IAGG…CVFW, VWPA…TPPI, LIFN…VMLF, IVGK…ATLG, SGFW…ALYS, ISWI…GAWI, IMPE…AIIA, LFIP…VLWF, LAIN…LLII, FIWV…FLVA, and FFHG…IMII.

Belongs to the HAK/KUP transporter (TC 2.A.72) family.

The protein resides in the cell inner membrane. It carries out the reaction K(+)(in) + H(+)(in) = K(+)(out) + H(+)(out). Functionally, transport of potassium into the cell. Likely operates as a K(+):H(+) symporter. The polypeptide is Probable potassium transport system protein Kup (Cytophaga hutchinsonii (strain ATCC 33406 / DSM 1761 / CIP 103989 / NBRC 15051 / NCIMB 9469 / D465)).